The chain runs to 82 residues: Small ribosomal subunit protein bS16 (82 aa).

The protein belongs to the bacterial ribosomal protein bS16 family.

The polypeptide is Small ribosomal subunit protein bS16 (Erwinia tasmaniensis (strain DSM 17950 / CFBP 7177 / CIP 109463 / NCPPB 4357 / Et1/99)).